Reading from the N-terminus, the 461-residue chain is Adenosylmethionine-8-amino-7-oxononanoate aminotransferase (461 aa).

117-118 (GA) provides a ligand contact to pyridoxal 5'-phosphate. Tyrosine 150 is a substrate binding site. Aspartate 263 lines the pyridoxal 5'-phosphate pocket. Positions 296, 331, and 426 each coordinate substrate. The residue at position 296 (lysine 296) is an N6-(pyridoxal phosphate)lysine.

It belongs to the class-III pyridoxal-phosphate-dependent aminotransferase family. BioA subfamily. Homodimer. The cofactor is pyridoxal 5'-phosphate.

The protein localises to the cytoplasm. The catalysed reaction is (8S)-8-amino-7-oxononanoate + S-adenosyl-L-methionine = S-adenosyl-4-methylsulfanyl-2-oxobutanoate + (7R,8S)-7,8-diammoniononanoate. It participates in cofactor biosynthesis; biotin biosynthesis; 7,8-diaminononanoate from 8-amino-7-oxononanoate (SAM route): step 1/1. In terms of biological role, catalyzes the transfer of the alpha-amino group from S-adenosyl-L-methionine (SAM) to 7-keto-8-aminopelargonic acid (KAPA) to form 7,8-diaminopelargonic acid (DAPA). It is the only aminotransferase known to utilize SAM as an amino donor. This chain is Adenosylmethionine-8-amino-7-oxononanoate aminotransferase, found in Methanocaldococcus jannaschii (strain ATCC 43067 / DSM 2661 / JAL-1 / JCM 10045 / NBRC 100440) (Methanococcus jannaschii).